Reading from the N-terminus, the 203-residue chain is MKIQRKFYEKSALQVAKYLLGKILVNEVEGITLKGKIVETEAYIGAIDKASHAYGGKKTERVMPLYGKPGTAYVYLIYGMYHCFNVITKVEGEAEGVLIRAIEPLEGIEKMAYLRYKKPISEISKTQFKNLTTGPGKLCIALNIDKSNNKQDLCNEGTLYIEHNDKEKFNIVESKRIGIEYAEEAKDFLWRFYIEDNPWISKK.

It belongs to the DNA glycosylase MPG family.

The polypeptide is Putative 3-methyladenine DNA glycosylase (Clostridium tetani (strain Massachusetts / E88)).